The primary structure comprises 433 residues: Protein RETICULATA-RELATED 1, chloroplastic (433 aa).

A chloroplast-targeting transit peptide spans 1-63; that stretch reads MSISLKISHI…LSSRNLRNRC (63 aa). Val-64 is subject to N-acetylvaline. Residues 93 to 105 are compositionally biased toward acidic residues; it reads DLEPELDDGDGGD. A disordered region spans residues 93–143; it reads DLEPELDDGDGGDENGNNDGGGNGGNGDGGGGGGDGEGDDGEDEADKAEEK. The span at 110–127 shows a compositional bias: gly residues; that stretch reads NDGGGNGGNGDGGGGGGD. Residues 128 to 139 show a composition bias toward acidic residues; the sequence is GEGDDGEDEADK. The next 2 helical transmembrane spans lie at 249-269 and 323-343; these read LYAADLLVGLVVDVALVGLLA and LLYGSVGFGCGLIGQGIANLI.

It belongs to the RETICULATA family. In terms of tissue distribution, expressed in root vasculature, distal region of young leaf primordia, leaf bundle sheath cells, hydathodes and pollen grains.

It localises to the plastid. Its subcellular location is the chloroplast membrane. May play a role in leaf development. This chain is Protein RETICULATA-RELATED 1, chloroplastic, found in Arabidopsis thaliana (Mouse-ear cress).